The primary structure comprises 149 residues: Macrodomain Ter protein (149 aa).

It belongs to the MatP family. Homodimer.

Its subcellular location is the cytoplasm. Functionally, required for spatial organization of the terminus region of the chromosome (Ter macrodomain) during the cell cycle. Prevents early segregation of duplicated Ter macrodomains during cell division. Binds specifically to matS, which is a 13 bp signature motif repeated within the Ter macrodomain. The protein is Macrodomain Ter protein of Vibrio cholerae serotype O1 (strain ATCC 39315 / El Tor Inaba N16961).